The primary structure comprises 487 residues: Photosystem II CP43 reaction center protein (487 aa).

The propeptide occupies 1–28; sequence MKVFVLGWLLKINLMKTLYSQRRFYHVE. 5 helical membrane-spanning segments follow: residues 83 to 107, 148 to 169, 192 to 214, 269 to 289, and 305 to 326; these read LFEV…PHLA, LIGP…RDKN, KSLF…RFVS, KPFA…LSYS, and WYNN…ASQA. Position 381 (E381) interacts with [CaMn4O5] cluster. Residues 461–485 form a helical membrane-spanning segment; it reads RARAAAAGFEKGINRENEPVLSMRP.

Belongs to the PsbB/PsbC family. PsbC subfamily. As to quaternary structure, PSII is composed of 1 copy each of membrane proteins PsbA, PsbB, PsbC, PsbD, PsbE, PsbF, PsbH, PsbI, PsbJ, PsbK, PsbL, PsbM, PsbT, PsbX, PsbY, PsbZ, Psb30/Ycf12, at least 3 peripheral proteins of the oxygen-evolving complex and a large number of cofactors. It forms dimeric complexes. The cofactor is Binds multiple chlorophylls and provides some of the ligands for the Ca-4Mn-5O cluster of the oxygen-evolving complex. It may also provide a ligand for a Cl- that is required for oxygen evolution. PSII binds additional chlorophylls, carotenoids and specific lipids..

It localises to the plastid. Its subcellular location is the chloroplast thylakoid membrane. One of the components of the core complex of photosystem II (PSII). It binds chlorophyll and helps catalyze the primary light-induced photochemical processes of PSII. PSII is a light-driven water:plastoquinone oxidoreductase, using light energy to abstract electrons from H(2)O, generating O(2) and a proton gradient subsequently used for ATP formation. The polypeptide is Photosystem II CP43 reaction center protein (Porphyra purpurea (Red seaweed)).